Here is a 356-residue protein sequence, read N- to C-terminus: Probable arabinogalactan endo-beta-1,4-galactanase A (356 aa).

The first 21 residues, M1 to A21, serve as a signal peptide directing secretion. Residue N133 is glycosylated (N-linked (GlcNAc...) asparagine). E157 (proton donor) is an active-site residue. The active-site Nucleophile is E268.

This sequence belongs to the glycosyl hydrolase 53 family.

The protein localises to the secreted. The enzyme catalyses The enzyme specifically hydrolyzes (1-&gt;4)-beta-D-galactosidic linkages in type I arabinogalactans.. Functionally, endogalactanase involved in the degradation of plant cell wall polysaccharides, and more particularly of hairy regions of pectin. The sequence is that of Probable arabinogalactan endo-beta-1,4-galactanase A (galA) from Aspergillus fumigatus (strain ATCC MYA-4609 / CBS 101355 / FGSC A1100 / Af293) (Neosartorya fumigata).